Consider the following 90-residue polypeptide: Large ribosomal subunit protein bL27 (90 aa).

Positions 1–21 are disordered; that stretch reads MASKKAGGSTRNGRDSEAKRL.

This sequence belongs to the bacterial ribosomal protein bL27 family.

This Neisseria gonorrhoeae (strain ATCC 700825 / FA 1090) protein is Large ribosomal subunit protein bL27.